Consider the following 226-residue polypeptide: Large ribosomal subunit protein uL1 (226 aa).

Belongs to the universal ribosomal protein uL1 family. In terms of assembly, part of the 50S ribosomal subunit.

Functionally, binds directly to 23S rRNA. The L1 stalk is quite mobile in the ribosome, and is involved in E site tRNA release. Its function is as follows. Protein L1 is also a translational repressor protein, it controls the translation of the L11 operon by binding to its mRNA. The protein is Large ribosomal subunit protein uL1 of Treponema denticola (strain ATCC 35405 / DSM 14222 / CIP 103919 / JCM 8153 / KCTC 15104).